The following is an 878-amino-acid chain: Leucine--tRNA ligase (878 aa).

The short motif at 43-54 (PYPSAQGLHVGH) is the 'HIGH' region element. The 'KMSKS' region motif lies at 634 to 638 (KMSKA). Position 637 (K637) interacts with ATP.

The protein belongs to the class-I aminoacyl-tRNA synthetase family.

It localises to the cytoplasm. The enzyme catalyses tRNA(Leu) + L-leucine + ATP = L-leucyl-tRNA(Leu) + AMP + diphosphate. The protein is Leucine--tRNA ligase of Treponema pallidum subsp. pallidum (strain SS14).